The chain runs to 83 residues: RNA-binding protein Hfq (83 aa).

The 60-residue stretch at 10–69 folds into the Sm domain; it reads DPFLNALRREHVPVSIYLVNGIKLQGQIESFDQYVVLLRNTVTQMVYKHAISTIVPGRAV.

Belongs to the Hfq family. Homohexamer.

In terms of biological role, RNA chaperone that binds small regulatory RNA (sRNAs) and mRNAs to facilitate mRNA translational regulation in response to envelope stress, environmental stress and changes in metabolite concentrations. Also binds with high specificity to tRNAs. The chain is RNA-binding protein Hfq from Paracidovorax citrulli (strain AAC00-1) (Acidovorax citrulli).